The primary structure comprises 301 residues: Glycine--tRNA ligase alpha subunit (301 aa).

This sequence belongs to the class-II aminoacyl-tRNA synthetase family. As to quaternary structure, tetramer of two alpha and two beta subunits.

It localises to the cytoplasm. The catalysed reaction is tRNA(Gly) + glycine + ATP = glycyl-tRNA(Gly) + AMP + diphosphate. The chain is Glycine--tRNA ligase alpha subunit from Proteus mirabilis (strain HI4320).